The primary structure comprises 245 residues: MIIPALDLIDGTVVRLHQGDYGKQRDYGNDPLPRLQDYAAQGAEVLHLVDLTGAKDPAKRQIPLIKTLVAGVNVPVQVGGGVRSEEDVAALLEAGVARVVVGSTAVKSPEMVKGWFERFGADALVLALDVRIDEQGNKQVAVSGWQENSGVSLEQLVETYLPVGLKHVLCTDISRDGTLAGSNVSLYEEVCARYPQVAFQSSGGIGNINDVAAMRGTGVRGVIVGRALLEGKFTVKEAIACWQNA.

Residue Asp7 is the Proton acceptor of the active site. Residue Asp129 is the Proton donor of the active site.

It belongs to the HisA/HisF family.

The protein resides in the cytoplasm. The enzyme catalyses 1-(5-phospho-beta-D-ribosyl)-5-[(5-phospho-beta-D-ribosylamino)methylideneamino]imidazole-4-carboxamide = 5-[(5-phospho-1-deoxy-D-ribulos-1-ylimino)methylamino]-1-(5-phospho-beta-D-ribosyl)imidazole-4-carboxamide. It functions in the pathway amino-acid biosynthesis; L-histidine biosynthesis; L-histidine from 5-phospho-alpha-D-ribose 1-diphosphate: step 4/9. The polypeptide is 1-(5-phosphoribosyl)-5-[(5-phosphoribosylamino)methylideneamino] imidazole-4-carboxamide isomerase (Escherichia coli O17:K52:H18 (strain UMN026 / ExPEC)).